Consider the following 134-residue polypeptide: UPF0412 protein YaaI (134 aa).

An N-terminal signal peptide occupies residues 1–23 (MKSVFTISASLAISLMLCCTAQA).

The protein belongs to the UPF0412 family.

This Escherichia coli (strain K12) protein is UPF0412 protein YaaI.